The following is a 420-amino-acid chain: Dynein axonemal assembly factor 4 (420 aa).

In terms of domain architecture, CS spans 3–87 (VRVSEFSWQQ…KEPVLWESLS (85 aa)). The segment at 7-103 (EFSWQQTPAA…EMMQRIREKS (97 aa)) is mediates interaction with ESR1 and STUB1. The span at 165 to 192 (CQKKADGQKRVQRKEKPLQGKQAEERGA) shows a compositional bias: basic and acidic residues. The disordered stretch occupies residues 165–212 (CQKKADGQKRVQRKEKPLQGKQAEERGALKPQSLPRKAPPTRLPTRGR). TPR repeat units follow at residues 288-321 (PDWL…NRKI), 323-355 (VLYL…LTPP), and 364-397 (MKAH…DPAN).

In terms of assembly, interacts with ZMYND10. Interacts with STUB1. Interacts with ESR1 and ESR2. Interacts with DNAAF2. Interacts with CCT3, CCT4, CCT5 and CCT8. Interacts with DNAAF6/PIH1D3.

The protein resides in the nucleus. The protein localises to the cytoplasm. Its subcellular location is the cell projection. It localises to the neuron projection. It is found in the dynein axonemal particle. In terms of biological role, involved in neuronal migration during development of the cerebral neocortex. May regulate the stability and proteasomal degradation of the estrogen receptors that play an important role in neuronal differentiation, survival and plasticity. Axonemal dynein assembly factor required for ciliary motility. The chain is Dynein axonemal assembly factor 4 from Rattus norvegicus (Rat).